A 173-amino-acid chain; its full sequence is Small ribosomal subunit protein mS25 (173 aa).

It belongs to the mitochondrion-specific ribosomal protein mS25 family. In terms of assembly, component of the mitochondrial small ribosomal subunit (mt-SSU). Mature mammalian 55S mitochondrial ribosomes consist of a small (28S) and a large (39S) subunit. The 28S small subunit contains a 12S ribosomal RNA (12S mt-rRNA) and 30 different proteins. The 39S large subunit contains a 16S rRNA (16S mt-rRNA), a copy of mitochondrial valine transfer RNA (mt-tRNA(Val)), which plays an integral structural role, and 52 different proteins.

It localises to the mitochondrion. The protein is Small ribosomal subunit protein mS25 (MRPS25) of Homo sapiens (Human).